A 155-amino-acid chain; its full sequence is Small ribosomal subunit protein uS7 (155 aa).

Belongs to the universal ribosomal protein uS7 family. As to quaternary structure, part of the 30S ribosomal subunit. Contacts proteins S9 and S11.

Its function is as follows. One of the primary rRNA binding proteins, it binds directly to 16S rRNA where it nucleates assembly of the head domain of the 30S subunit. Is located at the subunit interface close to the decoding center, probably blocks exit of the E-site tRNA. The polypeptide is Small ribosomal subunit protein uS7 (Cytophaga hutchinsonii (strain ATCC 33406 / DSM 1761 / CIP 103989 / NBRC 15051 / NCIMB 9469 / D465)).